Here is a 176-residue protein sequence, read N- to C-terminus: Nucleoside triphosphate/diphosphate phosphatase (176 aa).

Catalysis depends on Arg23, which acts as the Proton donor. Residues Asn87, Asp103, Asp105, Asp107, Asp120, and Glu123 each contribute to the Mg(2+) site.

The protein belongs to the Ntdp family. The cofactor is Mg(2+).

The enzyme catalyses a ribonucleoside 5'-triphosphate + H2O = a ribonucleoside 5'-diphosphate + phosphate + H(+). It carries out the reaction a ribonucleoside 5'-diphosphate + H2O = a ribonucleoside 5'-phosphate + phosphate + H(+). In terms of biological role, has nucleoside phosphatase activity towards nucleoside triphosphates and nucleoside diphosphates. In Bacillus mycoides (strain KBAB4) (Bacillus weihenstephanensis), this protein is Nucleoside triphosphate/diphosphate phosphatase.